A 364-amino-acid chain; its full sequence is Dihydroorotate dehydrogenase (quinone) (364 aa).

FMN-binding positions include 61–65 (AGYDK) and Thr-85. Lys-65 is a substrate binding site. Residue 110-114 (NRLGF) participates in substrate binding. 2 residues coordinate FMN: Asn-139 and Asn-170. Position 170 (Asn-170) interacts with substrate. Ser-173 serves as the catalytic Nucleophile. Asn-175 is a substrate binding site. FMN-binding residues include Lys-215 and Ser-243. Residue 244–245 (NT) coordinates substrate. FMN-binding positions include Gly-266, Gly-295, and 316–317 (YT).

Belongs to the dihydroorotate dehydrogenase family. Type 2 subfamily. Monomer. FMN serves as cofactor.

Its subcellular location is the cell membrane. It catalyses the reaction (S)-dihydroorotate + a quinone = orotate + a quinol. It participates in pyrimidine metabolism; UMP biosynthesis via de novo pathway; orotate from (S)-dihydroorotate (quinone route): step 1/1. Functionally, catalyzes the conversion of dihydroorotate to orotate with quinone as electron acceptor. The sequence is that of Dihydroorotate dehydrogenase (quinone) from Brucella anthropi (strain ATCC 49188 / DSM 6882 / CCUG 24695 / JCM 21032 / LMG 3331 / NBRC 15819 / NCTC 12168 / Alc 37) (Ochrobactrum anthropi).